The following is a 620-amino-acid chain: Ferric/cupric reductase transmembrane component 7 (620 aa).

Topologically, residues 1-45 are extracellular; it reads MIEERDLVLSNGIHCIADIHSELYARLKKESQAATPWVYQKQYGK. A helical membrane pass occupies residues 46-66; it reads FVTYFVAVIIFLSLIKKLAFM. The Cytoplasmic portion of the chain corresponds to 67-107; that stretch reads YYDSSEEFLPEKKNSPTTPSVFLARIMTKLVAFNRYICYRK. A helical transmembrane segment spans residues 108-128; sequence FPTLIFSYLGIPTSVGTFLVV. The Extracellular portion of the chain corresponds to 129–167; the sequence is MATTLYTLLYCFVPHPFYRPCAGFGSPPLSVRAGIMAIS. One can recognise a Ferric oxidoreductase domain in the interval 161–320; sequence AGIMAISLVP…LAVKGYLRPG (160 aa). The chain crosses the membrane as a helical span at residues 168–188; that stretch reads LVPFVFSLSGKINVIGWLVGL. Residues 189-194 lie on the Cytoplasmic side of the membrane; it reads SYEKIN. Residues 195–215 form a helical membrane-spanning segment; it reads IYHQWASILCLFFSWVHVIPF. H197 and H211 together coordinate heme. Residues 216 to 237 lie on the Extracellular side of the membrane; that stretch reads LRQARHEGGYERMHQRWKASDM. A helical membrane pass occupies residues 238 to 258; the sequence is WRSGVPPILFLNLLWLSSLPI. Topologically, residues 259–265 are cytoplasmic; that stretch reads ARRHFYE. A helical transmembrane segment spans residues 266 to 286; it reads IFLQLHWILAVGFYISLFYHV. Residues H271 and H285 each contribute to the heme site. At 287–292 the chain is on the extracellular side; that stretch reads YPELNS. Residues 293–313 traverse the membrane as a helical segment; the sequence is HMYLVATIVVWFAQLFYRLAV. Topologically, residues 314–620 are cytoplasmic; it reads KGYLRPGRSF…CYLHSESFGY (307 aa). An FAD-binding FR-type domain is found at 321–419; that stretch reads RSFMASTIAN…DGPYGGIERD (99 aa). 369–375 serves as a coordination point for FAD; that stretch reads HPFSIFP. 411–414 contacts NADP(+); it reads GPYG. A disordered region spans residues 519 to 543; it reads SDQSDLAKREKDTEFGQDDTESNST. Residues 523-532 show a composition bias toward basic and acidic residues; that stretch reads DLAKREKDTE. Residue 578-579 coordinates NADP(+); sequence CF.

This sequence belongs to the ferric reductase (FRE) family. FAD serves as cofactor.

Its subcellular location is the cell membrane. The enzyme catalyses 2 a Fe(II)-siderophore + NADP(+) + H(+) = 2 a Fe(III)-siderophore + NADPH. Cell surface metalloreductase. May be involved in copper homeostasis. The protein is Ferric/cupric reductase transmembrane component 7 (FRE7) of Saccharomyces cerevisiae (strain ATCC 204508 / S288c) (Baker's yeast).